The sequence spans 269 residues: Senescence-associated protein 13 (269 aa).

21 to 45 (LVTGGSKGIGEAVVEELAMLGAKVH) contributes to the NADP(+) binding site. S154 is a binding site for substrate. Catalysis depends on Y167, which acts as the Proton acceptor.

The protein belongs to the short-chain dehydrogenases/reductases (SDR) family. SDR65C subfamily.

Unspecific reductase providing both diastereomeric alcohols from the prochiral ketones. Active on cyclic monoterpenes and small flexible lipophilic carbonyls. No activity with tropinone, nitrogen-containing tropinone analogs, tropine or pseudotropine as substrate. This chain is Senescence-associated protein 13, found in Arabidopsis thaliana (Mouse-ear cress).